The following is a 168-amino-acid chain: ATP synthase F(1) complex subunit delta, mitochondrial (168 aa).

Residues 1–22 constitute a mitochondrion transit peptide; sequence MLPAALLRRPGLGRLVRHARAY. An N6-acetyllysine; alternate mark is found at Lys136 and Lys165. 2 positions are modified to N6-succinyllysine; alternate: Lys136 and Lys165.

This sequence belongs to the ATPase epsilon chain family. As to quaternary structure, component of the ATP synthase complex composed at least of ATP5F1A/subunit alpha, ATP5F1B/subunit beta, ATP5MC1/subunit c (homooctomer), MT-ATP6/subunit a, MT-ATP8/subunit 8, ATP5ME/subunit e, ATP5MF/subunit f, ATP5MG/subunit g, ATP5MK/subunit k, ATP5MJ/subunit j, ATP5F1C/subunit gamma, ATP5F1D/subunit delta, ATP5F1E/subunit epsilon, ATP5PF/subunit F6, ATP5PB/subunit b, ATP5PD/subunit d, ATP5PO/subunit OSCP. ATP synthase complex consists of a soluble F(1) head domain (subunits alpha(3) and beta(3)) - the catalytic core - and a membrane F(0) domain - the membrane proton channel (subunits c, a, 8, e, f, g, k and j). These two domains are linked by a central stalk (subunits gamma, delta, and epsilon) rotating inside the F1 region and a stationary peripheral stalk (subunits F6, b, d, and OSCP). Component of a complex composed at least by ATPIF1, ATP5F1A, ATP5F1B, ATP5F1C AND ATP5F1E.

The protein resides in the mitochondrion. It localises to the mitochondrion inner membrane. Its function is as follows. Subunit delta, of the mitochondrial membrane ATP synthase complex (F(1)F(0) ATP synthase or Complex V) that produces ATP from ADP in the presence of a proton gradient across the membrane which is generated by electron transport complexes of the respiratory chain. ATP synthase complex consist of a soluble F(1) head domain - the catalytic core - and a membrane F(1) domain - the membrane proton channel. These two domains are linked by a central stalk rotating inside the F(1) region and a stationary peripheral stalk. During catalysis, ATP synthesis in the catalytic domain of F(1) is coupled via a rotary mechanism of the central stalk subunits to proton translocation. In vivo, can only synthesize ATP although its ATP hydrolase activity can be activated artificially in vitro. With the central stalk subunit gamma, is essential for the biogenesis of F(1) catalytic part of the ATP synthase complex namely in the formation of F1 assembly intermediate. In Homo sapiens (Human), this protein is ATP synthase F(1) complex subunit delta, mitochondrial.